A 544-amino-acid chain; its full sequence is Chaperonin GroEL 1 (544 aa).

Residues 29-32 (TLGP), 86-90 (DGTTT), G413, 479-481 (NAA), and D495 contribute to the ATP site. Residues 525–544 (PEPKDNAPAGAGAGGGDFDY) are disordered. Over residues 535–544 (AGAGGGDFDY) the composition is skewed to gly residues.

The protein belongs to the chaperonin (HSP60) family. In terms of assembly, forms a cylinder of 14 subunits composed of two heptameric rings stacked back-to-back. Interacts with the co-chaperonin GroES.

It localises to the cytoplasm. The enzyme catalyses ATP + H2O + a folded polypeptide = ADP + phosphate + an unfolded polypeptide.. Its function is as follows. Together with its co-chaperonin GroES, plays an essential role in assisting protein folding. The GroEL-GroES system forms a nano-cage that allows encapsulation of the non-native substrate proteins and provides a physical environment optimized to promote and accelerate protein folding. The protein is Chaperonin GroEL 1 of Nostoc sp. (strain PCC 7120 / SAG 25.82 / UTEX 2576).